A 335-amino-acid polypeptide reads, in one-letter code: Glyceraldehyde-3-phosphate dehydrogenase (335 aa).

NAD(+) is bound by residues 12 to 13 (RI), aspartate 34, arginine 78, and serine 120. Residues 151–153 (SCT) and threonine 182 contribute to the D-glyceraldehyde 3-phosphate site. Cysteine 152 functions as the Nucleophile in the catalytic mechanism. Asparagine 183 is a binding site for NAD(+). D-glyceraldehyde 3-phosphate contacts are provided by residues arginine 197, 210-211 (TG), and arginine 233. An NAD(+)-binding site is contributed by asparagine 315.

It belongs to the glyceraldehyde-3-phosphate dehydrogenase family. Homotetramer.

It localises to the cytoplasm. It catalyses the reaction D-glyceraldehyde 3-phosphate + phosphate + NAD(+) = (2R)-3-phospho-glyceroyl phosphate + NADH + H(+). It functions in the pathway carbohydrate degradation; glycolysis; pyruvate from D-glyceraldehyde 3-phosphate: step 1/5. Functionally, catalyzes the oxidative phosphorylation of glyceraldehyde 3-phosphate (G3P) to 1,3-bisphosphoglycerate (BPG) using the cofactor NAD. The first reaction step involves the formation of a hemiacetal intermediate between G3P and a cysteine residue, and this hemiacetal intermediate is then oxidized to a thioester, with concomitant reduction of NAD to NADH. The reduced NADH is then exchanged with the second NAD, and the thioester is attacked by a nucleophilic inorganic phosphate to produce BPG. This chain is Glyceraldehyde-3-phosphate dehydrogenase (gap), found in Priestia megaterium (strain DSM 319 / IMG 1521) (Bacillus megaterium).